A 430-amino-acid polypeptide reads, in one-letter code: MLYEKFEYNINNLIGNFGLSKIAAAVSGGSDSVALLYLANIWAEKNNIELSVISVDHNLREQSKQETHYIQNISNSLNRKHYSLSFDHQNNFSNLQERAREGRYDLMTNLCLELDILVLLTAHHEDDYVENFCLRLERNSGIFGLSSSNINWYNNIQIIRPLYNIPKSELVEYLVSHNIKWFEDESNSSDKYRRNIIRQKLAKGEDYIKADIILQQLKINDLLDNKFKPELISAIAEAVKIFEYGFAFLDLVKFDKFSNEVKVQIINFLLIIISGQFRAARFYSVEPILKLITQDVNFKNTLHGCVINRIQNELLIYREFGKKLPESKILLDKSVIWDNRFRITRNQETPNCFVTHLSLEDYKMIKKQLDLEPLKNLSCKNHNAIIFTLPIIKILEKVIAIPHISYYDNDMWNFEVSFAPNFVSRFTHFC.

Residue 27-32 (SGGSDS) coordinates ATP.

The protein belongs to the tRNA(Ile)-lysidine synthase family.

Its subcellular location is the cytoplasm. The catalysed reaction is cytidine(34) in tRNA(Ile2) + L-lysine + ATP = lysidine(34) in tRNA(Ile2) + AMP + diphosphate + H(+). In terms of biological role, ligates lysine onto the cytidine present at position 34 of the AUA codon-specific tRNA(Ile) that contains the anticodon CAU, in an ATP-dependent manner. Cytidine is converted to lysidine, thus changing the amino acid specificity of the tRNA from methionine to isoleucine. In Rickettsia felis (strain ATCC VR-1525 / URRWXCal2) (Rickettsia azadi), this protein is tRNA(Ile)-lysidine synthase.